We begin with the raw amino-acid sequence, 187 residues long: uncharacterized protein (187 aa).

The segment at M1–G95 is disordered. Residues R46 to K80 are compositionally biased toward basic residues.

It localises to the mitochondrion. This is an uncharacterized protein from Arabidopsis thaliana (Mouse-ear cress).